Here is a 240-residue protein sequence, read N- to C-terminus: Small ribosomal subunit protein uS3 (240 aa).

The KH type-2 domain maps to 39–107 (IRDFIKKEAK…ELHLNIVEVR (69 aa)). Composition is skewed to basic and acidic residues over residues 212–221 (PQARDRRATE) and 231–240 (PRRDRDRDAR). Residues 212 to 240 (PQARDRRATEAQDGPSPRGPRRDRDRDAR) are disordered.

The protein belongs to the universal ribosomal protein uS3 family. As to quaternary structure, part of the 30S ribosomal subunit. Forms a tight complex with proteins S10 and S14.

Binds the lower part of the 30S subunit head. Binds mRNA in the 70S ribosome, positioning it for translation. This chain is Small ribosomal subunit protein uS3, found in Paracoccus denitrificans (strain Pd 1222).